Reading from the N-terminus, the 852-residue chain is MEEFRFLYLIYSAAFALCLVVSVLAQDQSGFISIDCGIPSGSSYKDDTTGINYVSDSSFVETGVSKSIPFTAQRQLQNLRSFPEGSRNCYTLIPIQGKGKKYLIRASFMYGNYDGENGSPEFDLFLGGNIWDTVLLSNGSSIVSKEVVYLSQSENIFVCLGNKGKGTPFISTLELRFLGNDNTTYDSPNGALFFSRRWDLRSLMGSPVRYDDDVYDRIWIPRNFGYCREINTSLPVTSDNNSYSLSSLVMSTAMTPINTTRPITMTLENSDPNVRYFVYMHFAEVEDLSLKPNQTREFDISINGVTVAAGFSPKYLQTNTFFLNPESQSKIAFSLVRTPKSTLPPIVNALEIYVANSFSQSLTNQEDGDAVTSLKTSYKVKKNWHGDPCLPNDYIWEGLNCSYDSLTPPRITSLNLSSSGLTGHISSSFSNLTMIQELDLSNNGLTGDIPEFLSKLKFLRVLNLENNTLTGSVPSELLERSNTGSFSLRLGENPGLCTEISCRKSNSKKLVIPLVASFAALFILLLLSGVFWRIRNRRNKSVNSAPQTSPMAKSENKLLFTFADVIKMTNNFGQVLGKGGFGTVYHGFYDNLQVAVKLLSETSAQGFKEFRSEVEVLVRVHHVNLTALIGYFHEGDQMGLIYEFMANGNMADHLAGKYQHTLSWRQRLQIALDAAQGLEYLHCGCKPPIVHRDVKTSNILLNEKNRAKLADFGLSRSFHTESRSHVSTLVAGTPGYLDPLCFETNGLNEKSDIYSFGVVLLEMITGKTVIKESQTKRVHVSDWVISILRSTNDVNNVIDSKMAKDFDVNSVWKVVELALSSVSQNVSDRPNMPHIVRGLNECLQREESNKNY.

The first 25 residues, 1 to 25 (MEEFRFLYLIYSAAFALCLVVSVLA), serve as a signal peptide directing secretion. Over 26–510 (QDQSGFISID…SCRKSNSKKL (485 aa)) the chain is Extracellular. Residues asparagine 138, asparagine 182, asparagine 231, asparagine 240, asparagine 258, asparagine 293, asparagine 400, asparagine 415, and asparagine 431 are each glycosylated (N-linked (GlcNAc...) asparagine). LRR repeat units follow at residues 410-432 (RITS…FSNL), 434-457 (MIQE…SKLK), and 458-479 (FLRV…ELLE). Asparagine 466 carries an N-linked (GlcNAc...) asparagine glycan. The helical transmembrane segment at 511–531 (VIPLVASFAALFILLLLSGVF) threads the bilayer. Topologically, residues 532-852 (WRIRNRRNKS…LQREESNKNY (321 aa)) are cytoplasmic. Residue threonine 561 is modified to Phosphothreonine. A Protein kinase domain is found at 570–843 (NNFGQVLGKG…HIVRGLNECL (274 aa)). Residues 576 to 584 (LGKGGFGTV) and lysine 597 contribute to the ATP site. The residue at position 642 (tyrosine 642) is a Phosphotyrosine. Catalysis depends on aspartate 693, which acts as the Proton acceptor. 2 positions are modified to phosphoserine: serine 697 and serine 727. Threonine 728 and threonine 733 each carry phosphothreonine.

This sequence belongs to the protein kinase superfamily. Ser/Thr protein kinase family.

Its subcellular location is the membrane. The catalysed reaction is L-seryl-[protein] + ATP = O-phospho-L-seryl-[protein] + ADP + H(+). It carries out the reaction L-threonyl-[protein] + ATP = O-phospho-L-threonyl-[protein] + ADP + H(+). This chain is Probable LRR receptor-like serine/threonine-protein kinase At1g05700, found in Arabidopsis thaliana (Mouse-ear cress).